A 622-amino-acid polypeptide reads, in one-letter code: Chaperone protein HscA homolog (622 aa).

Belongs to the heat shock protein 70 family.

Functionally, chaperone involved in the maturation of iron-sulfur cluster-containing proteins. Has a low intrinsic ATPase activity which is markedly stimulated by HscB. This Burkholderia pseudomallei (strain K96243) protein is Chaperone protein HscA homolog.